The chain runs to 296 residues: Probable deoxyuridine 5'-triphosphate nucleotidohydrolase (296 aa).

Residues 66–102 adopt a coiled-coil conformation; that stretch reads EIDKNIVKNLEDKVNCLEQDVQYLKNELKKKDADWQQ.

The protein belongs to the dUTPase family.

It carries out the reaction dUTP + H2O = dUMP + diphosphate + H(+). It functions in the pathway pyrimidine metabolism; dUMP biosynthesis; dUMP from dCTP (dUTP route): step 2/2. Functionally, this enzyme is involved in nucleotide metabolism: it produces dUMP, the immediate precursor of thymidine nucleotides and it decreases the intracellular concentration of dUTP so that uracil cannot be incorporated into DNA. The sequence is that of Probable deoxyuridine 5'-triphosphate nucleotidohydrolase from Acheta domesticus (House cricket).